Reading from the N-terminus, the 185-residue chain is Small ribosomal subunit protein uS5 (185 aa).

The S5 DRBM domain occupies 29 to 92 (LEEKVVKINR…EKAKKQLVRI (64 aa)).

Belongs to the universal ribosomal protein uS5 family. In terms of assembly, part of the 30S ribosomal subunit. Contacts proteins S4 and S8.

Functionally, with S4 and S12 plays an important role in translational accuracy. In terms of biological role, located at the back of the 30S subunit body where it stabilizes the conformation of the head with respect to the body. This is Small ribosomal subunit protein uS5 from Aster yellows witches'-broom phytoplasma (strain AYWB).